The primary structure comprises 171 residues: uncharacterized protein (171 aa).

This is an uncharacterized protein from Ureaplasma parvum serovar 3 (strain ATCC 700970).